Here is a 695-residue protein sequence, read N- to C-terminus: MELQTMKITKDCVVEVSSEEEGFEGAWFRAVLEENPGNSSRRKLRVRYSTLLDMDGSSPLIEHIEQRFIRPVPPEENQQKDVVLEEGLLVDADHKDGWWTGVVVKKMEDDNYLVYFDLPPDIIQFERKQLRTHLIWTGGTWIQPEIEESNKSMFSPGTMVEVFSAKEAVWSPAMVVKETDVDDKKKFIVKDCNRYLSCNGDEARPTNIVNSRRVRPIPPPSSVDKYALLESVETFSGLGWHKGQVRKILSENRYTVRLEATQQESTIRHSDLRPFMVWEDGVWYNDLKQKPIKETPPTILKRKPMRSCSAAKSMTPTSATKHLRSFLNSKEISETPTKAKFVSATRELGKNKADAVMNDKTHLLITPQETSIAPVITVTPLKQQDAETEGKKSPKKTPEPVKHQNGLENSSTQHEMPEEENSNEKSRKRKREQNQNSNLNETDETCNVSKAGVNGTSDTIRVDDVDDQPLSSWINIPTVLSSDQSSNVVDNSAADVEETQAKGALTIEPFTKNLPFWKTYEMEKGYKTVPQNPHFSPLLEFKEDIREWSAVGMMVSFYGLLEEVKKLQLDVSSSKLGSLSTCFAELEKHGFDIATPQSRINKVLSLQVGRAKKVEERKCLEKRIEAEEIEMQKFEHEMVEVERKMLELKRRAEVAKEKKEAADKMIVEMKSSAETIDQEIANVELEFITSVLAPW.

Positions Ile-376–Asp-464 are disordered. Basic and acidic residues predominate over residues Gln-384 to Lys-402. The segment covering Asn-434–Thr-459 has biased composition (polar residues). The DUF724 domain occupies Pro-509–Pro-694. The stretch at Val-614 to Glu-684 forms a coiled coil.

Homodimer.

May be involved in the polar growth of plant cells via transportation of RNAs. The protein is DUF724 domain-containing protein 3 of Arabidopsis thaliana (Mouse-ear cress).